The sequence spans 343 residues: Anthranilate phosphoribosyltransferase (343 aa).

Residues Gly-86, 89–90 (GD), Thr-94, 96–99 (NIST), 114–122 (KHGNKSASG), and Ser-126 each bind 5-phospho-alpha-D-ribose 1-diphosphate. Gly-86 contributes to the anthranilate binding site. Ser-98 is a binding site for Mg(2+). Asn-117 is an anthranilate binding site. Position 172 (Arg-172) interacts with anthranilate. Positions 231 and 232 each coordinate Mg(2+).

It belongs to the anthranilate phosphoribosyltransferase family. In terms of assembly, homodimer. Mg(2+) is required as a cofactor.

The catalysed reaction is N-(5-phospho-beta-D-ribosyl)anthranilate + diphosphate = 5-phospho-alpha-D-ribose 1-diphosphate + anthranilate. Its pathway is amino-acid biosynthesis; L-tryptophan biosynthesis; L-tryptophan from chorismate: step 2/5. Its function is as follows. Catalyzes the transfer of the phosphoribosyl group of 5-phosphorylribose-1-pyrophosphate (PRPP) to anthranilate to yield N-(5'-phosphoribosyl)-anthranilate (PRA). This chain is Anthranilate phosphoribosyltransferase, found in Prochlorococcus marinus subsp. pastoris (strain CCMP1986 / NIES-2087 / MED4).